We begin with the raw amino-acid sequence, 423 residues long: Carboxypeptidase B2 (423 aa).

The N-terminal stretch at 1-22 is a signal peptide; the sequence is MKLCSLAVLVPIVLFCEQHVFA. Positions 23–114 are cleaved as a propeptide — activation peptide; that stretch reads FQSGQVLAAL…QISNDTVSPR (92 aa). N-linked (GlcNAc...) asparagine glycans are attached at residues N44, N73, and N85. N108 is a glycosylation site (N-linked (GlcNAc...) (complex) asparagine). Residues 122 to 419 enclose the Peptidase M14 domain; the sequence is QYHSLNEIYS…AAVSKIAWHV (298 aa). A disulfide bridge links C178 with C191. Zn(2+)-binding residues include H181 and E184. Substrate-binding positions include 181 to 184 and R239; that span reads HARE. N241 is a glycosylation site (N-linked (GlcNAc...) asparagine; partial). Cystine bridges form between C250–C274 and C265–C279. 256 to 257 serves as a coordination point for substrate; the sequence is NR. H310 provides a ligand contact to Zn(2+). Substrate-binding positions include 311-312 and Y363; that span reads SY. E385 (proton donor/acceptor) is an active-site residue.

The protein belongs to the peptidase M14 family. Requires Zn(2+) as cofactor. In terms of processing, N-glycosylated. N-glycan at Asn-108: Hex5HexNAc4. Plasma; synthesized in the liver.

It localises to the secreted. The enzyme catalyses Release of C-terminal Arg and Lys from a polypeptide.. TAFI/CPB2 is unique among carboxypeptidases in that it spontaneously inactivates with a short half-life, a property that is crucial for its role in controlling blood clot lysis. The zymogen is stabilized by interactions with the activation peptide. Release of the activation peptide increases a dynamic flap mobility and in time this leads to conformational changes that disrupt the catalytic site and expose a cryptic thrombin-cleavage site present at Arg-324. Cleaves C-terminal arginine or lysine residues from biologically active peptides such as kinins or anaphylatoxins in the circulation thereby regulating their activities. Down-regulates fibrinolysis by removing C-terminal lysine residues from fibrin that has already been partially degraded by plasmin. The sequence is that of Carboxypeptidase B2 (CPB2) from Homo sapiens (Human).